The sequence spans 172 residues: Myosin regulatory light chain 12B (172 aa).

The segment covering 1 to 16 (MSSKKAKTKTTKKRPQ) has biased composition (basic residues). A disordered region spans residues 1–20 (MSSKKAKTKTTKKRPQRATS). Thr19 carries the phosphothreonine; by MLCK and ZIPK/DAPK3 modification. Ser20 bears the Phosphoserine; by MLCK and ZIPK/DAPK3 mark. EF-hand domains follow at residues 29 to 64 (SQIQ…LGKN), 98 to 133 (DPED…MGDR), and 134 to 169 (FTDE…GAKD). Ca(2+) is bound by residues Asp42, Asn44, Asp46, and Asp53.

In terms of assembly, myosin is a hexamer of 2 heavy chains and 4 light chains: interacts with myosin heavy chain MYO19. In terms of processing, phosphorylation increases the actin-activated myosin ATPase activity and thereby regulates the contractile activity. It is required to generate the driving force in the migration of the cells but not necessary for localization of myosin-2 at the leading edge. Phosphorylation is reduced following epigallocatechin-3-O-gallate treatment. As to expression, ubiquitously expressed in various hematopoietic cells.

In terms of biological role, myosin regulatory subunit that plays an important role in regulation of both smooth muscle and nonmuscle cell contractile activity via its phosphorylation. Phosphorylation triggers actin polymerization in vascular smooth muscle. Implicated in cytokinesis, receptor capping, and cell locomotion. This is Myosin regulatory light chain 12B (MYL12B) from Homo sapiens (Human).